A 30-amino-acid chain; its full sequence is Small toxic protein BsrE (30 aa).

A helical membrane pass occupies residues 4–24; that stretch reads FQALMLMLAIGSFIIALLTYI.

Its subcellular location is the cell membrane. In terms of biological role, toxic component of a type I toxin-antitoxin (TA) system; overexpression in the absence of cognate antisense antitoxin SR5 RNA leads to cell lysis. Base pairing occurs between the 3' UTRs of bsrE mRNA and SR5 RNA which leads to bsrE mRNA degradation initiated by RNase III (rnc) and RNase J1 (rnjA). Genetic evidence suggests an unidentified RNA-binding protein may exist that promotes TA RNA interaction. The protein is Small toxic protein BsrE of Bacillus subtilis (strain 168).